The sequence spans 697 residues: tRNA 5-methylaminomethyl-2-thiouridine biosynthesis bifunctional protein MnmC (697 aa).

The segment at 1 to 269 is tRNA (mnm(5)s(2)U34)-methyltransferase; the sequence is MNKTPLLSVS…LRQQLQQQFA (269 aa). The interval 287 to 697 is FAD-dependent cmnm(5)s(2)U34 oxidoreductase; that stretch reads IGGGIASASL…RKLLKGKALM (411 aa).

The protein in the N-terminal section; belongs to the methyltransferase superfamily. tRNA (mnm(5)s(2)U34)-methyltransferase family. In the C-terminal section; belongs to the DAO family. Requires FAD as cofactor.

The protein localises to the cytoplasm. The catalysed reaction is 5-aminomethyl-2-thiouridine(34) in tRNA + S-adenosyl-L-methionine = 5-methylaminomethyl-2-thiouridine(34) in tRNA + S-adenosyl-L-homocysteine + H(+). In terms of biological role, catalyzes the last two steps in the biosynthesis of 5-methylaminomethyl-2-thiouridine (mnm(5)s(2)U) at the wobble position (U34) in tRNA. Catalyzes the FAD-dependent demodification of cmnm(5)s(2)U34 to nm(5)s(2)U34, followed by the transfer of a methyl group from S-adenosyl-L-methionine to nm(5)s(2)U34, to form mnm(5)s(2)U34. This Shewanella frigidimarina (strain NCIMB 400) protein is tRNA 5-methylaminomethyl-2-thiouridine biosynthesis bifunctional protein MnmC.